A 396-amino-acid polypeptide reads, in one-letter code: Ribosomal RNA large subunit methyltransferase I (396 aa).

One can recognise a PUA domain in the interval 2–81 (TVRLILAKGR…EVIDCAFFIR (80 aa)).

Belongs to the methyltransferase superfamily. RlmI family.

The protein localises to the cytoplasm. It carries out the reaction cytidine(1962) in 23S rRNA + S-adenosyl-L-methionine = 5-methylcytidine(1962) in 23S rRNA + S-adenosyl-L-homocysteine + H(+). In terms of biological role, specifically methylates the cytosine at position 1962 (m5C1962) of 23S rRNA. The sequence is that of Ribosomal RNA large subunit methyltransferase I from Yersinia pseudotuberculosis serotype O:1b (strain IP 31758).